We begin with the raw amino-acid sequence, 302 residues long: Protoheme IX farnesyltransferase (302 aa).

A run of 9 helical transmembrane segments spans residues 27–47 (VLTLVVFTGWCGLLAAPQSIH), 48–68 (PVLGFTAVLCIALGAGAAGAL), 97–117 (SALHFGVGLGIFSVLLMGLAL), 119–139 (VLAAAILAVSILFYVVVYTIW), 148–168 (IVIGGAAGAFPALIGWAAATG), 176–196 (LLFALVFLWTPPHFWALALFI), 219–239 (IQIMLYTVPMVIAAVAPWAMG), 240–260 (LTGAIYGIGASLLSALFLLLA), and 280–300 (LFGFSILYLFLIFGLVVADKV).

Belongs to the UbiA prenyltransferase family. Protoheme IX farnesyltransferase subfamily.

It is found in the cell inner membrane. It catalyses the reaction heme b + (2E,6E)-farnesyl diphosphate + H2O = Fe(II)-heme o + diphosphate. Its pathway is porphyrin-containing compound metabolism; heme O biosynthesis; heme O from protoheme: step 1/1. Converts heme B (protoheme IX) to heme O by substitution of the vinyl group on carbon 2 of heme B porphyrin ring with a hydroxyethyl farnesyl side group. The protein is Protoheme IX farnesyltransferase of Rhizorhabdus wittichii (strain DSM 6014 / CCUG 31198 / JCM 15750 / NBRC 105917 / EY 4224 / RW1) (Sphingomonas wittichii).